The primary structure comprises 100 residues: uncharacterized protein (100 aa).

The N-terminal stretch at 1–23 is a signal peptide; it reads MKYVALAFVLSLVILQISAQVGA.

In terms of tissue distribution, nacreous layer of shell (at protein level). Expressed primarily in the mantle with highest level in the mantle pallium and lower level in the mantle edge.

The protein localises to the secreted. This is an uncharacterized protein from Margaritifera margaritifera (Freshwater pearl mussel).